The chain runs to 174 residues: uncharacterized protein (174 aa).

The next 2 membrane-spanning stretches (helical) occupy residues 8–28 (FLFI…NYVF) and 146–166 (IVSW…IQFI).

It is found in the cell membrane. This is an uncharacterized protein from Haemophilus influenzae (strain ATCC 51907 / DSM 11121 / KW20 / Rd).